The primary structure comprises 598 residues: Centrosomal protein of 70 kDa (598 aa).

Residues 16–38 show a composition bias toward polar residues; that stretch reads DSTKEPLSTVTSQAQDSSLSANR. A disordered region spans residues 16 to 43; it reads DSTKEPLSTVTSQAQDSSLSANRPVTEK. 2 coiled-coil regions span residues 99–210 and 255–317; these read TRQQ…EEDR and TYKG…NIKL. One copy of the TPR repeat lies at 484 to 517; sequence NGVYPRMNEVYARLGEMNNAVRNLQELLGLDSSS.

In terms of assembly, directly interacts with tubulin-gamma; this interaction determines centrosomal localization.

It is found in the cytoplasm. It localises to the cytoskeleton. Its subcellular location is the microtubule organizing center. The protein resides in the centrosome. Plays a role in the organization of both preexisting and nascent microtubules in interphase cells. During mitosis, required for the organization and orientation of the mitotic spindle. In Rattus norvegicus (Rat), this protein is Centrosomal protein of 70 kDa (Cep70).